A 311-amino-acid chain; its full sequence is MHGVLKVRTSEEKAKAQRLKELEKIESYNKLVKSFEELREKQNGRYDEISLSVSKLVLIENPEFYTIWNYRRLAILQFTETKENSELQVIYQNEMKFLEECIQRFTKSYWIWFHRQWIALRMDNCDWEREMKLCTKLLNFDLRNFHCWGHRRFILKHSNIKLEDELKYTTEKVEQNFSNYSAWHQRSSILPKIYKEPEQLLEKILEEFELVRNAVYTEPKDSSSWIYHKWLVATIKSIPNSNYIEVLKNELTQIYDLIELEPDCKWPIYTTLLLKIEIGGFEKQELLDIISQLIKLDPDHKNYYKSLETKI.

Residues 12-43 (EKAKAQRLKELEKIESYNKLVKSFEELREKQN) adopt a coiled-coil conformation. PFTA repeat units lie at residues 49 to 82 (ISLS…TETK), 93 to 126 (NEMK…DNCD), 129 to 162 (REMK…NIKL), 164 to 197 (DELK…YKEP), and 206 to 239 (EEFE…KSIP).

The protein belongs to the protein prenyltransferase subunit alpha family. In terms of assembly, heterodimer of an alpha and a beta subunit.

It carries out the reaction geranylgeranyl diphosphate + L-cysteinyl-[protein] = S-geranylgeranyl-L-cysteinyl-[protein] + diphosphate. Catalyzes the transfer of a geranylgeranyl moiety from geranylgeranyl diphosphate to proteins with a C-terminal sequence motif -XCC or -XCXC, where both cysteines may become modified. This chain is Geranylgeranyl transferase type-2 subunit alpha (rabggta), found in Dictyostelium discoideum (Social amoeba).